Reading from the N-terminus, the 100-residue chain is Small ribosomal subunit protein uS14 (100 aa).

It belongs to the universal ribosomal protein uS14 family. Part of the 30S ribosomal subunit. Contacts proteins S3 and S10.

Its function is as follows. Binds 16S rRNA, required for the assembly of 30S particles and may also be responsible for determining the conformation of the 16S rRNA at the A site. The sequence is that of Small ribosomal subunit protein uS14 from Prochlorococcus marinus (strain MIT 9313).